The following is a 59-amino-acid chain: Large ribosomal subunit protein uL30 (59 aa).

Belongs to the universal ribosomal protein uL30 family. Part of the 50S ribosomal subunit.

This Macrococcus caseolyticus (strain JCSC5402) (Macrococcoides caseolyticum) protein is Large ribosomal subunit protein uL30.